Here is a 91-residue protein sequence, read N- to C-terminus: Small ribosomal subunit protein uS19 (91 aa).

It belongs to the universal ribosomal protein uS19 family.

Functionally, protein S19 forms a complex with S13 that binds strongly to the 16S ribosomal RNA. This chain is Small ribosomal subunit protein uS19, found in Syntrophotalea carbinolica (strain DSM 2380 / NBRC 103641 / GraBd1) (Pelobacter carbinolicus).